Here is a 522-residue protein sequence, read N- to C-terminus: Maturase K (522 aa).

Belongs to the intron maturase 2 family. MatK subfamily.

Its subcellular location is the plastid. It localises to the chloroplast. Functionally, usually encoded in the trnK tRNA gene intron. Probably assists in splicing its own and other chloroplast group II introns. In Aristea glauca, this protein is Maturase K.